Here is a 90-residue protein sequence, read N- to C-terminus: Small ribosomal subunit protein bS20 (90 aa).

The protein belongs to the bacterial ribosomal protein bS20 family.

Functionally, binds directly to 16S ribosomal RNA. This chain is Small ribosomal subunit protein bS20, found in Rickettsia akari (strain Hartford).